A 251-amino-acid polypeptide reads, in one-letter code: uncharacterized protein (251 aa).

This sequence belongs to the FAM243 family.

This is an uncharacterized protein from Homo sapiens (Human).